The chain runs to 246 residues: Polyhedrin (246 aa).

The protein belongs to the polyhedrin family.

Functionally, major component of the virus occlusion bodies, which are large proteinaceous structures (polyhedra), that protect the virus from the outside environment for extended periods until they are ingested by insect larvae. This is Polyhedrin (PH) from Spodoptera exigua nuclear polyhedrosis virus (strain US) (SeMNPV).